The following is a 203-amino-acid chain: Ribosome maturation factor RimP (203 aa).

Positions 179 to 203 (VSSEGEDGGEARQAPKLNPKKPGKK) are disordered.

Belongs to the RimP family.

The protein resides in the cytoplasm. Functionally, required for maturation of 30S ribosomal subunits. This chain is Ribosome maturation factor RimP, found in Gluconobacter oxydans (strain 621H) (Gluconobacter suboxydans).